We begin with the raw amino-acid sequence, 307 residues long: Acetaldehyde dehydrogenase (307 aa).

The active-site Acyl-thioester intermediate is the cysteine 131. NAD(+)-binding positions include 162-170 (SIGPGTRKN) and asparagine 273.

The protein belongs to the acetaldehyde dehydrogenase family.

It carries out the reaction acetaldehyde + NAD(+) + CoA = acetyl-CoA + NADH + H(+). This Stutzerimonas stutzeri (Pseudomonas stutzeri) protein is Acetaldehyde dehydrogenase (nahO).